The following is a 360-amino-acid chain: Phospho-N-acetylmuramoyl-pentapeptide-transferase (360 aa).

Transmembrane regions (helical) follow at residues 26–46 (AILSVLTALGLSLWMGPIMIK), 70–90 (GTPTMGGIMILAAISITILLW), 94–114 (SNPYVWAVLTVLLGYGAIGFV), 132–152 (WKYFWQSLIAFVVAFALYAYG), 168–188 (IMPQLGLMYIILTYFVIVGTS), 199–219 (GLAIMPTVLVAAGFAVIAWAT), 236–256 (ASELVVVCTAIVGAGLGFLWF), 263–283 (VFMGDVGSLALGGALGTIAVL), 288–308 (LILVIMGGVFVMETLSVILQV), and 338–358 (VIVRFWIISMVLVLIGLATLK).

The protein belongs to the glycosyltransferase 4 family. MraY subfamily. Mg(2+) is required as a cofactor.

The protein resides in the cell inner membrane. The catalysed reaction is UDP-N-acetyl-alpha-D-muramoyl-L-alanyl-gamma-D-glutamyl-meso-2,6-diaminopimeloyl-D-alanyl-D-alanine + di-trans,octa-cis-undecaprenyl phosphate = di-trans,octa-cis-undecaprenyl diphospho-N-acetyl-alpha-D-muramoyl-L-alanyl-D-glutamyl-meso-2,6-diaminopimeloyl-D-alanyl-D-alanine + UMP. It functions in the pathway cell wall biogenesis; peptidoglycan biosynthesis. In terms of biological role, catalyzes the initial step of the lipid cycle reactions in the biosynthesis of the cell wall peptidoglycan: transfers peptidoglycan precursor phospho-MurNAc-pentapeptide from UDP-MurNAc-pentapeptide onto the lipid carrier undecaprenyl phosphate, yielding undecaprenyl-pyrophosphoryl-MurNAc-pentapeptide, known as lipid I. In Vibrio campbellii (strain ATCC BAA-1116), this protein is Phospho-N-acetylmuramoyl-pentapeptide-transferase.